The following is a 454-amino-acid chain: Bifunctional protein GlmU (454 aa).

The segment at 1-226 is pyrophosphorylase; that stretch reads MSTTVIILAA…AFEVEGVNDR (226 aa). Residues 8–11, Lys22, Gln73, 78–79, 100–102, Gly137, Glu151, Asn166, and Asn224 each bind UDP-N-acetyl-alpha-D-glucosamine; these read LAAG, GT, and YGD. Asp102 is a Mg(2+) binding site. Mg(2+) is bound at residue Asn224. Residues 227–247 form a linker region; it reads LQLAALEREFQKQQAKELMQQ. Positions 248-454 are N-acetyltransferase; the sequence is GVTFADPARF…NYQRPQKLKK (207 aa). UDP-N-acetyl-alpha-D-glucosamine is bound by residues Arg330 and Lys348. His360 acts as the Proton acceptor in catalysis. UDP-N-acetyl-alpha-D-glucosamine contacts are provided by Tyr363 and Asn374. Residues Ala377, 383–384, Ser402, Ala420, and Arg437 each bind acetyl-CoA; that span reads NY.

In the N-terminal section; belongs to the N-acetylglucosamine-1-phosphate uridyltransferase family. The protein in the C-terminal section; belongs to the transferase hexapeptide repeat family. As to quaternary structure, homotrimer. The cofactor is Mg(2+).

It localises to the cytoplasm. It carries out the reaction alpha-D-glucosamine 1-phosphate + acetyl-CoA = N-acetyl-alpha-D-glucosamine 1-phosphate + CoA + H(+). The catalysed reaction is N-acetyl-alpha-D-glucosamine 1-phosphate + UTP + H(+) = UDP-N-acetyl-alpha-D-glucosamine + diphosphate. It participates in nucleotide-sugar biosynthesis; UDP-N-acetyl-alpha-D-glucosamine biosynthesis; N-acetyl-alpha-D-glucosamine 1-phosphate from alpha-D-glucosamine 6-phosphate (route II): step 2/2. Its pathway is nucleotide-sugar biosynthesis; UDP-N-acetyl-alpha-D-glucosamine biosynthesis; UDP-N-acetyl-alpha-D-glucosamine from N-acetyl-alpha-D-glucosamine 1-phosphate: step 1/1. It functions in the pathway bacterial outer membrane biogenesis; LPS lipid A biosynthesis. Its function is as follows. Catalyzes the last two sequential reactions in the de novo biosynthetic pathway for UDP-N-acetylglucosamine (UDP-GlcNAc). The C-terminal domain catalyzes the transfer of acetyl group from acetyl coenzyme A to glucosamine-1-phosphate (GlcN-1-P) to produce N-acetylglucosamine-1-phosphate (GlcNAc-1-P), which is converted into UDP-GlcNAc by the transfer of uridine 5-monophosphate (from uridine 5-triphosphate), a reaction catalyzed by the N-terminal domain. This chain is Bifunctional protein GlmU, found in Acinetobacter baumannii (strain ACICU).